The chain runs to 190 residues: MNNNLQGDAIAAAIDVLNEKRVIAYPTEAVFGVGCDPDSETAVMRLLELKQRPVDKGLILIAANYEQLKPYIDDTMLTDVQRETIFSCWPGPVTFVFPAPATTPRWLTGRFDSLAVRVTDHPLVVALCQAYGKPLVSTSANLSGLPPCRTVDEVRAQFGAAFPVVPGETRGRLNPSEIRDALTGELFRQG.

In terms of domain architecture, YrdC-like spans 7 to 190 (GDAIAAAIDV…ALTGELFRQG (184 aa)).

It belongs to the SUA5 family. TsaC subfamily.

It is found in the cytoplasm. The enzyme catalyses L-threonine + hydrogencarbonate + ATP = L-threonylcarbamoyladenylate + diphosphate + H2O. Its function is as follows. Required for the formation of a threonylcarbamoyl group on adenosine at position 37 (t(6)A37) in tRNAs that read codons beginning with adenine. Catalyzes the conversion of L-threonine, HCO(3)(-)/CO(2) and ATP to give threonylcarbamoyl-AMP (TC-AMP) as the acyladenylate intermediate, with the release of diphosphate. This chain is Threonylcarbamoyl-AMP synthase, found in Shigella flexneri.